A 96-amino-acid chain; its full sequence is Guanine nucleotide-binding protein alpha-9 subunit (96 aa).

The G-alpha domain occupies 2-96 (YFHSTAIILF…ISASLKMVGV (95 aa)). Residues 9-16 (ILFLNKID) are G1 motif. Residues 13–16 (NKID) and Ala69 each bind GTP. The G2 motif stretch occupies residues 67 to 72 (TSATDT).

This sequence belongs to the G-alpha family. G proteins are composed of 3 units; alpha, beta and gamma. The alpha chain contains the guanine nucleotide binding site. As to expression, expressed in ASJ neurons.

Guanine nucleotide-binding proteins (G proteins) are involved as modulators or transducers in various transmembrane signaling systems. Plays a role in innate immunity and maintaining survival in response to metabolites of E.coli. This might be by regulating the expression and signaling of genes such as lys-8, ins-7 and daf-28. Has a role in lifespan to promote longevity. The polypeptide is Guanine nucleotide-binding protein alpha-9 subunit (Caenorhabditis elegans).